The sequence spans 296 residues: MSALPAWLRVEARSYSEMAKVRSVLSRLGVYTVCEGARCPNVFRCWGEGTATFMILGEVCTRACRFCSVRTGNPRGYVDLDEPRRVAEAVRRLGLRYVVVTSVDRDDLPDGGAFQYASAIREIRRLAPGALVEVLTPDFRGSREAVETVAEAGPDVFAHNVETVRRLTPLVRDRRASYETSLRVLKTAKEVGCRLTKSGIMLGLGESFDEVVEVLDDLRKAEVDIVTIGQYVRPTKSARHLPVARWVPLEEFQKLGEVALSMGFKAVASAPLVRSSYRAEDLYEMALGLRPRAVLV.

Residues Cys-34, Cys-39, Cys-45, Cys-60, Cys-64, Cys-67, and Ser-276 each coordinate [4Fe-4S] cluster. One can recognise a Radical SAM core domain in the interval 46 to 265 (WGEGTATFMI…GEVALSMGFK (220 aa)).

Belongs to the radical SAM superfamily. Lipoyl synthase family. [4Fe-4S] cluster is required as a cofactor.

The protein localises to the cytoplasm. It catalyses the reaction [[Fe-S] cluster scaffold protein carrying a second [4Fe-4S](2+) cluster] + N(6)-octanoyl-L-lysyl-[protein] + 2 oxidized [2Fe-2S]-[ferredoxin] + 2 S-adenosyl-L-methionine + 4 H(+) = [[Fe-S] cluster scaffold protein] + N(6)-[(R)-dihydrolipoyl]-L-lysyl-[protein] + 4 Fe(3+) + 2 hydrogen sulfide + 2 5'-deoxyadenosine + 2 L-methionine + 2 reduced [2Fe-2S]-[ferredoxin]. The protein operates within protein modification; protein lipoylation via endogenous pathway; protein N(6)-(lipoyl)lysine from octanoyl-[acyl-carrier-protein]: step 2/2. In terms of biological role, catalyzes the radical-mediated insertion of two sulfur atoms into the C-6 and C-8 positions of the octanoyl moiety bound to the lipoyl domains of lipoate-dependent enzymes, thereby converting the octanoylated domains into lipoylated derivatives. This chain is Lipoyl synthase, found in Pyrobaculum arsenaticum (strain DSM 13514 / JCM 11321 / PZ6).